A 202-amino-acid polypeptide reads, in one-letter code: MGERTGVIVAGGQSTRMGDVDKTVVDVAGVPLVRRVANRLLAVVDHLVVNCRRDQQERLAAALEGLSPTFAVDEVPDRGPTAGIMTGLSTVETPYAAVVAADMPYLDPELLEYLFERADSHDAAVPRPEEWFEPLHAVYRPEPMAEACAEALEAADARIITPLSSLDHIVIERDAIVEHGSLRSFESVDTPEDLERARERLS.

Residues 9-11, lysine 22, asparagine 50, aspartate 77, and aspartate 102 each bind GTP; that span reads VAG. Position 102 (aspartate 102) interacts with Mg(2+).

This sequence belongs to the MobA family. It depends on Mg(2+) as a cofactor.

The protein localises to the cytoplasm. It catalyses the reaction Mo-molybdopterin + GTP + H(+) = Mo-molybdopterin guanine dinucleotide + diphosphate. In terms of biological role, transfers a GMP moiety from GTP to Mo-molybdopterin (Mo-MPT) cofactor (Moco or molybdenum cofactor) to form Mo-molybdopterin guanine dinucleotide (Mo-MGD) cofactor. The polypeptide is Probable molybdenum cofactor guanylyltransferase (Natronomonas pharaonis (strain ATCC 35678 / DSM 2160 / CIP 103997 / JCM 8858 / NBRC 14720 / NCIMB 2260 / Gabara) (Halobacterium pharaonis)).